The primary structure comprises 371 residues: 3-dehydroquinate synthase (371 aa).

Residues 70 to 75, 104 to 108, 128 to 129, Lys-141, and Lys-150 each bind NAD(+); these read DAEDGK, GAVTD, and TT. Zn(2+)-binding residues include Glu-183, His-246, and His-262.

It belongs to the sugar phosphate cyclases superfamily. Dehydroquinate synthase family. Requires Co(2+) as cofactor. Zn(2+) is required as a cofactor. It depends on NAD(+) as a cofactor.

Its subcellular location is the cytoplasm. It carries out the reaction 7-phospho-2-dehydro-3-deoxy-D-arabino-heptonate = 3-dehydroquinate + phosphate. Its pathway is metabolic intermediate biosynthesis; chorismate biosynthesis; chorismate from D-erythrose 4-phosphate and phosphoenolpyruvate: step 2/7. Functionally, catalyzes the conversion of 3-deoxy-D-arabino-heptulosonate 7-phosphate (DAHP) to dehydroquinate (DHQ). This Saccharopolyspora erythraea (strain ATCC 11635 / DSM 40517 / JCM 4748 / NBRC 13426 / NCIMB 8594 / NRRL 2338) protein is 3-dehydroquinate synthase.